The primary structure comprises 413 residues: Palmitoyl-acyl carrier protein thioesterase, chloroplastic (413 aa).

Residues 1-57 constitute a chloroplast transit peptide; sequence MVATAVTSAFFPVTSSPDSSDSKNKKLGSIKSKPSVSSGSLQVKANAQAPPKINGTV. The tract at residues 12-79 is disordered; the sequence is PVTSSPDSSD…DGASSPPPRT (68 aa). Positions 29 to 40 are enriched in low complexity; it reads SIKSKPSVSSGS. Active-site residues include N310, H312, and C347. The disordered stretch occupies residues 394–413; that stretch reads WRPKHAKSSANMDQITAKRA.

The protein belongs to the acyl-ACP thioesterase family.

The protein resides in the plastid. It is found in the chloroplast. The enzyme catalyses hexadecanoyl-[ACP] + H2O = hexadecanoate + holo-[ACP] + H(+). Functionally, plays an essential role in chain termination during de novo fatty acid synthesis. High thioesterase activity for palmitoyl-ACP versus other acyl-ACPs. This chain is Palmitoyl-acyl carrier protein thioesterase, chloroplastic (FATB1), found in Gossypium hirsutum (Upland cotton).